An 817-amino-acid chain; its full sequence is Leucine--tRNA ligase (817 aa).

The 'HIGH' region signature appears at 42–52; that stretch reads PYPSGRLHMGH. Residues 576 to 580 carry the 'KMSKS' region motif; that stretch reads KMSKS. Position 579 (Lys-579) interacts with ATP.

The protein belongs to the class-I aminoacyl-tRNA synthetase family.

It localises to the cytoplasm. The enzyme catalyses tRNA(Leu) + L-leucine + ATP = L-leucyl-tRNA(Leu) + AMP + diphosphate. The chain is Leucine--tRNA ligase from Halorhodospira halophila (strain DSM 244 / SL1) (Ectothiorhodospira halophila (strain DSM 244 / SL1)).